The chain runs to 333 residues: Eukaryotic translation initiation factor 3 subunit I (333 aa).

WD repeat units lie at residues 8 to 47 (GHER…RLGT), 50 to 91 (GHTG…ALLK), 144 to 183 (CNDS…VLVN), and 186 to 225 (EHSR…HQKT). Phosphothreonine is present on T219. The residue at position 264 (K264) is an N6-acetyllysine. K282 participates in a covalent cross-link: Glycyl lysine isopeptide (Lys-Gly) (interchain with G-Cter in ubiquitin). A WD 5 repeat occupies 283 to 324 (GHFGPINSVAFHPDGKSYSSGGEDGYVRIHYFDPQYFEFEFE). At Y308 the chain carries Phosphotyrosine.

It belongs to the eIF-3 subunit I family. Component of the eukaryotic translation initiation factor 3 (eIF-3) complex, which is composed of 13 subunits: EIF3A, EIF3B, EIF3C, EIF3D, EIF3E, EIF3F, EIF3G, EIF3H, EIF3I, EIF3J, EIF3K, EIF3L and EIF3M. The eIF-3 complex appears to include 3 stable modules: module A is composed of EIF3A, EIF3B, EIF3G and EIF3I; module B is composed of EIF3F, EIF3H, and EIF3M; and module C is composed of EIF3C, EIF3D, EIF3E, EIF3K and EIF3L. EIF3C of module C binds EIF3B of module A and EIF3H of module B, thereby linking the three modules. EIF3J is a labile subunit that binds to the eIF-3 complex via EIF3B. The eIF-3 complex interacts with RPS6KB1 under conditions of nutrient depletion. Mitogenic stimulation leads to binding and activation of a complex composed of MTOR and RPTOR, leading to phosphorylation and release of RPS6KB1 and binding of EIF4B to eIF-3. Phosphorylated by TGF-beta type II receptor.

The protein localises to the cytoplasm. Component of the eukaryotic translation initiation factor 3 (eIF-3) complex, which is required for several steps in the initiation of protein synthesis. The eIF-3 complex associates with the 40S ribosome and facilitates the recruitment of eIF-1, eIF-1A, eIF-2:GTP:methionyl-tRNAi and eIF-5 to form the 43S pre-initiation complex (43S PIC). The eIF-3 complex stimulates mRNA recruitment to the 43S PIC and scanning of the mRNA for AUG recognition. The eIF-3 complex is also required for disassembly and recycling of post-termination ribosomal complexes and subsequently prevents premature joining of the 40S and 60S ribosomal subunits prior to initiation. The eIF-3 complex specifically targets and initiates translation of a subset of mRNAs involved in cell proliferation, including cell cycling, differentiation and apoptosis, and uses different modes of RNA stem-loop binding to exert either translational activation or repression. The protein is Eukaryotic translation initiation factor 3 subunit I of Oryctolagus cuniculus (Rabbit).